Here is a 278-residue protein sequence, read N- to C-terminus: Probable endonuclease 4 (278 aa).

His-67, His-107, Glu-141, Asp-173, His-176, His-210, Asp-223, His-225, and Glu-255 together coordinate Zn(2+).

The protein belongs to the AP endonuclease 2 family. Zn(2+) is required as a cofactor.

The catalysed reaction is Endonucleolytic cleavage to 5'-phosphooligonucleotide end-products.. In terms of biological role, endonuclease IV plays a role in DNA repair. It cleaves phosphodiester bonds at apurinic or apyrimidinic (AP) sites, generating a 3'-hydroxyl group and a 5'-terminal sugar phosphate. In Natronomonas pharaonis (strain ATCC 35678 / DSM 2160 / CIP 103997 / JCM 8858 / NBRC 14720 / NCIMB 2260 / Gabara) (Halobacterium pharaonis), this protein is Probable endonuclease 4.